The primary structure comprises 187 residues: Large ribosomal subunit protein bL25 (187 aa).

It belongs to the bacterial ribosomal protein bL25 family. CTC subfamily. As to quaternary structure, part of the 50S ribosomal subunit; part of the 5S rRNA/L5/L18/L25 subcomplex. Contacts the 5S rRNA. Binds to the 5S rRNA independently of L5 and L18.

In terms of biological role, this is one of the proteins that binds to the 5S RNA in the ribosome where it forms part of the central protuberance. The chain is Large ribosomal subunit protein bL25 from Tropheryma whipplei (strain Twist) (Whipple's bacillus).